Consider the following 224-residue polypeptide: 2,5-diamino-6-ribosylamino-4(3H)-pyrimidinone 5'-phosphate reductase (224 aa).

NADP(+)-binding positions include Gly16, Thr57, Asp61, 83–86 (SKLR), Val134, and 156–159 (GGTL).

Belongs to the HTP reductase family. As to quaternary structure, homodimer.

The catalysed reaction is 2,5-diamino-6-(1-D-ribitylamino)pyrimidin-4(3H)-one 5'-phosphate + NADP(+) = 2,5-diamino-6-(1-D-ribosylamino)pyrimidin-4(3H)-one 5'-phosphate + NADPH + H(+). The enzyme catalyses 2,5-diamino-6-(1-D-ribitylamino)pyrimidin-4(3H)-one 5'-phosphate + NAD(+) = 2,5-diamino-6-(1-D-ribosylamino)pyrimidin-4(3H)-one 5'-phosphate + NADH + H(+). Its pathway is cofactor biosynthesis; riboflavin biosynthesis. In terms of biological role, catalyzes an early step in riboflavin biosynthesis, the NAD(P)H-dependent reduction of the ribose side chain of 2,5-diamino-6-ribosylamino-4(3H)-pyrimidinone 5'-phosphate, yielding 2,5-diamino-6-ribitylamino-4(3H)-pyrimidinone 5'-phosphate. The beta anomer is the authentic substrate, and the alpha anomer can serve as substrate subsequent to spontaneous anomerization. NADPH and NADH function equally well as the reductants. Does not catalyze the reduction of 5-amino-6-(5-phospho-D-ribosylamino)uracil to 5-amino-6-(5-phospho-D-ribitylamino)uracil. This is 2,5-diamino-6-ribosylamino-4(3H)-pyrimidinone 5'-phosphate reductase (arfC) from Methanocaldococcus jannaschii (strain ATCC 43067 / DSM 2661 / JAL-1 / JCM 10045 / NBRC 100440) (Methanococcus jannaschii).